The following is a 652-amino-acid chain: tRNA 5-methylaminomethyl-2-thiouridine biosynthesis bifunctional protein MnmC (652 aa).

The tRNA (mnm(5)s(2)U34)-methyltransferase stretch occupies residues 1 to 227; the sequence is MLSWKNDLTP…KREMLTGKYS (227 aa). The segment at 259 to 652 is FAD-dependent cmnm(5)s(2)U34 oxidoreductase; it reads IGAGIAGSTL…ARFLYRRIRK (394 aa).

This sequence in the N-terminal section; belongs to the methyltransferase superfamily. tRNA (mnm(5)s(2)U34)-methyltransferase family. It in the C-terminal section; belongs to the DAO family. It depends on FAD as a cofactor.

It localises to the cytoplasm. It carries out the reaction 5-aminomethyl-2-thiouridine(34) in tRNA + S-adenosyl-L-methionine = 5-methylaminomethyl-2-thiouridine(34) in tRNA + S-adenosyl-L-homocysteine + H(+). Its function is as follows. Catalyzes the last two steps in the biosynthesis of 5-methylaminomethyl-2-thiouridine (mnm(5)s(2)U) at the wobble position (U34) in tRNA. Catalyzes the FAD-dependent demodification of cmnm(5)s(2)U34 to nm(5)s(2)U34, followed by the transfer of a methyl group from S-adenosyl-L-methionine to nm(5)s(2)U34, to form mnm(5)s(2)U34. This is tRNA 5-methylaminomethyl-2-thiouridine biosynthesis bifunctional protein MnmC from Leptospira borgpetersenii serovar Hardjo-bovis (strain JB197).